Here is a 595-residue protein sequence, read N- to C-terminus: MARFNARLFSIAILGFQVARSAITYQHPDDLPGDVDYDFIVAGGGTAGLVVASRLGENSKWNVLVIEAGPSNKDVFATRVPGLAETLPTSHIDWNYTTVPQQALGGRSLNYSRAMILGGCSTHNGMVYTRGSKDDWNKWADVTGNRDLSWDSILPIMKKVEKFSEDFSDQSVEGHIDPSVHGNDGKLSVVASYTNVSFNDLLLETTKELVDEFPFKLDMNDGNPVGLTWNQYTIDHNAERSSSATAYLESTGDNVHVLLNTRVTRIVPTGKTNFRTVEFAVDAGGPRKQLTAKKEVILSGGFIASPQILMNSGIGDQEALKAVGVDTLVNNPSVGKNVSDQAATLVLFDTTLPNTDFDVDAAIVEWNNSHAGPLATGAPLNHLIWVRLSDDKLSGSDPSSGKDSPHIEFQFSKISHRIPPANVPNQVALPSQDSIGVVIQFSVVNLNSISRGSVSLNDNNPFSHPLIDLNMLGEEQDIAILREGVHSARRMLSSEAFKPFVNGSVHPPANITSDEDLDAFLHTTTKSYLHGVGTLSMSPQNASWGVVDPDFRVKGTTGLRVVDASVIPSVPAGHTQTPVYAFAEYASIVIAKSYN.

Positions 1–21 are cleaved as a signal peptide; sequence MARFNARLFSIAILGFQVARS. Asparagine 95 and asparagine 110 each carry an N-linked (GlcNAc...) asparagine glycan. Histidine 123 is modified (tele-8alpha-FAD histidine). N-linked (GlcNAc...) asparagine glycans are attached at residues asparagine 195, asparagine 337, asparagine 367, asparagine 502, and asparagine 510. The Proton acceptor role is filled by histidine 530. The N-linked (GlcNAc...) asparagine glycan is linked to asparagine 541. Residue histidine 574 is part of the active site.

This sequence belongs to the GMC oxidoreductase family. In terms of assembly, monomer. FAD serves as cofactor. Post-translationally, N-glycosylated.

The protein resides in the secreted. It carries out the reaction pyranose + acceptor = pyranos-2-ulose + reduced acceptor.. The enzyme catalyses pyranose + acceptor = pyranos-3-ulose + reduced acceptor.. The catalysed reaction is pyranose + acceptor = pyranos-2,3-diulose + reduced acceptor.. It catalyses the reaction a pyranoside + acceptor = a pyranosid-3-ulose + reduced acceptor.. It carries out the reaction a pyranoside + acceptor = a pyranosid-3,4-diulose + reduced acceptor.. Functionally, catalyzes the single-oxidation or sequential double oxidation reaction of carbohydrates primarily at carbon-2 and/or carbon-3 with the concomitant reduction of the flavin. The enzyme exhibits a broad sugar substrate specificity, oxidizing different aldopyranoses to the corresponding C-1, C-2, C-3 or C-1,2, C-2,3 and C-3,4 (di)dehydro sugars with substrate-specific regioselectivity. Accepts only a narrow range of electron acceptors such as substituted benzoquinones and complexed metal ions and reacts extremely slowly with O(2) as acceptor. May play a role in the natural recycling of plant matter by oxidizing all major monosaccharides in lignocellulose and by reducing quinone compounds or reactive radical species generated during lignin depolymerization. In Agaricus campestris (Field mushroom), this protein is Pyranose dehydrogenase.